Consider the following 455-residue polypeptide: T-box protein VegT-B (455 aa).

The segment at residues 57-230 (LWTQFHQEGT…HNPFAKGFRE (174 aa)) is a DNA-binding region (T-box). A compositionally biased stretch (basic and acidic residues) spans 229–241 (REQERSHKRDDVL). 2 disordered regions span residues 229–276 (REQE…RIKE) and 295–350 (ANQG…RRLT). The span at 308 to 326 (GVNQEQQVPTSSSNFYIKS) shows a compositional bias: polar residues.

Forms a repression complex on the promoters of the nodal/nr1 and siamois genes with the maternal factors tcf7l1/tcf3 and pouf5.1/oct-25. Interacts (via C-terminus) with tcf7l1/tcf3 (via N-terminus). Also interacts with the other POU-domain transcription factors pou5f1.2/oct-91 and pou5f1.3/oct-60. In terms of tissue distribution, maternally localized to the vegetal hemisphere of oocytes. Zygotic expression parallels blastopore formation and shifts from dorsal expression in the marginal zone of late blastula and early gastrula stages to a ventral/lateral expression at later stages. During neurula and tailbud stages, expressed in the posterior and anterior ends of the embryo. During tailbud stages, expressed in a subset of interneurons in the neural tube.

It is found in the nucleus. Functionally, transcription factor required for both mesoderm and endoderm formation in the embryo; signaling determinants and concentration levels may determine which germ layer is formed. Acts together with beta-catenin to activate genes that are responsible for mesoderm induction including wnt-8, eomes t/bra, siamois, mix1 and sox17. Directly binds to promoter DNA. Patterns the mesoderm along the dorsoventral and posterior axis. Activates siamois gene transcription when alone or in combination with beta-catenin, but inhibits siamois transcription in combination with pou5f1.1/oct-25. This is T-box protein VegT-B (vegt-b) from Xenopus laevis (African clawed frog).